Reading from the N-terminus, the 507-residue chain is Glucose-6-phosphate 1-dehydrogenase (507 aa).

2 residues coordinate NADP(+): Arg57 and Lys168. Substrate is bound by residues His198, Lys202, Glu236, and Asp255. His260 functions as the Proton acceptor in the catalytic mechanism. Substrate is bound at residue Lys356.

The protein belongs to the glucose-6-phosphate dehydrogenase family.

The catalysed reaction is D-glucose 6-phosphate + NADP(+) = 6-phospho-D-glucono-1,5-lactone + NADPH + H(+). Its pathway is carbohydrate degradation; pentose phosphate pathway; D-ribulose 5-phosphate from D-glucose 6-phosphate (oxidative stage): step 1/3. Functionally, catalyzes the oxidation of glucose 6-phosphate to 6-phosphogluconolactone. The chain is Glucose-6-phosphate 1-dehydrogenase from Chlamydia muridarum (strain MoPn / Nigg).